An 89-amino-acid chain; its full sequence is STLNVLRYSSLAAGIVYGAYHTYTLKLEGEKKQELYDYQKKLKLVEAAKAEYRKLNPPKQAASTEAVNLDDPEFDFGKFILGAVEKLGS.

Residue Ser1 is modified to N-acetylserine. The helical transmembrane segment at 8 to 25 threads the bilayer; that stretch reads YSSLAAGIVYGAYHTYTL.

As to quaternary structure, F-type ATP synthases have 2 components, the catalytic core F(1) and the membrane-embedded component F(0), linked together by a central stalk and a peripheral stalk. The central stalk, also called rotor shaft, is often seen as part of F(1). The peripheral stalk is seen as part of F(0). F(0) contains the membrane channel next to the rotor. F-type ATP synthases form dimers but each monomer functions independently in ATP generation. The dimer consists of 18 different polypeptides: ATP1 (subunit alpha, part of F(1), 3 molecules per monomer), ATP2 (subunit beta, part of F(1), 3 molecules per monomer), ATP3 (subunit gamma, part of the central stalk), ATP4 (subunit b, part of the peripheral stalk), ATP5/OSCP (subunit 5/OSCP, part of the peripheral stalk), ATP6 (subunit a, part of the peripheral stalk), ATP7 (subunit d, part of the peripheral stalk), ATP8 (subunit 8, part of the peripheral stalk), OLI1 (subunit c, part of the rotor, 10 molecules per monomer), ATP14 (subunit h, part of the peripheral stalk), ATP15 (subunit epsilon, part of the central stalk), ATP16 (subunit delta, part of the central stalk), ATP17 (subunit f, part of the peripheral stalk), ATP18 (subunit i/j, part of the peripheral stalk). Dimer-specific subunits are ATP19 (subunit k, at interface between monomers), ATP20 (subunit g, at interface between monomers), TIM11 (subunit e, at interface between monomers). Also contains subunit L.

It localises to the mitochondrion inner membrane. Mitochondrial membrane ATP synthase (F(1)F(0) ATP synthase or Complex V) produces ATP from ADP in the presence of a proton gradient across the membrane which is generated by electron transport complexes of the respiratory chain. F-type ATP synthases consist of two structural domains, F(1) - containing the extramembraneous catalytic core, and F(0) - containing the membrane proton channel, linked together by a central stalk and a peripheral stalk. During catalysis, ATP synthesis in the catalytic domain of F(1) is coupled via a rotary mechanism of the central stalk subunits to proton translocation. Part of the complex F(0) domain. Minor subunit located with subunit a/ATP6 in the membrane. Together with subunit g/ATP20, probably contributes to membrane curvature at the site of the ATP synthase dimer, ultimately contributing to formation of cristae. The protein is ATP synthase subunit e, mitochondrial of Pichia angusta (Yeast).